Here is a 159-residue protein sequence, read N- to C-terminus: Ribosomal RNA large subunit methyltransferase H (159 aa).

Residues L76, G108, and 127 to 132 (LSKMTF) contribute to the S-adenosyl-L-methionine site.

Belongs to the RNA methyltransferase RlmH family. In terms of assembly, homodimer.

It localises to the cytoplasm. It catalyses the reaction pseudouridine(1915) in 23S rRNA + S-adenosyl-L-methionine = N(3)-methylpseudouridine(1915) in 23S rRNA + S-adenosyl-L-homocysteine + H(+). Functionally, specifically methylates the pseudouridine at position 1915 (m3Psi1915) in 23S rRNA. This Ureaplasma urealyticum serovar 10 (strain ATCC 33699 / Western) protein is Ribosomal RNA large subunit methyltransferase H.